A 201-amino-acid chain; its full sequence is MAKHITGPEIERLIHLLARIPGLGPRSARRAALHLIKKKEALLEPLGTAIRDAVDKVRICSVCGNIDTTDPCSICTDPRRDNGTIIVVEDISDLWALERAGTLLARYHVLGGRLSPLDGIGPDELNITSLINRVIKDPITEIILAVNATIEGQTTAHYITDQLSNFSIKITRLAHGVPVGGELDYLDDGTLAAALRARTNF.

Residues 60 to 75 (CSVCGNIDTTDPCSIC) form a C4-type zinc finger. In terms of domain architecture, Toprim spans 83 to 178 (GTIIVVEDIS…KITRLAHGVP (96 aa)).

This sequence belongs to the RecR family.

May play a role in DNA repair. It seems to be involved in an RecBC-independent recombinational process of DNA repair. It may act with RecF and RecO. The protein is Recombination protein RecR of Bartonella bacilliformis (strain ATCC 35685 / KC583 / Herrer 020/F12,63).